The following is a 181-amino-acid chain: Protein Syd (181 aa).

The protein belongs to the Syd family.

The protein resides in the cell inner membrane. Interacts with the SecY protein in vivo. May bind preferentially to an uncomplexed state of SecY, thus functioning either as a chelating agent for excess SecY in the cell or as a regulatory factor that negatively controls the translocase function. In Klebsiella pneumoniae subsp. pneumoniae (strain ATCC 700721 / MGH 78578), this protein is Protein Syd.